Here is a 161-residue protein sequence, read N- to C-terminus: Phosphopantetheine adenylyltransferase (161 aa).

Ser10 lines the substrate pocket. Residues Ser10–Phe11 and His18 contribute to the ATP site. Residues Lys42, Leu74, and Arg88 each contribute to the substrate site. Residues Arg88 to Gly89, Glu99, and Tyr124 to Ser130 contribute to the ATP site.

Belongs to the bacterial CoaD family. Homohexamer. The cofactor is Mg(2+).

Its subcellular location is the cytoplasm. The enzyme catalyses (R)-4'-phosphopantetheine + ATP + H(+) = 3'-dephospho-CoA + diphosphate. The protein operates within cofactor biosynthesis; coenzyme A biosynthesis; CoA from (R)-pantothenate: step 4/5. Its function is as follows. Reversibly transfers an adenylyl group from ATP to 4'-phosphopantetheine, yielding dephospho-CoA (dPCoA) and pyrophosphate. The chain is Phosphopantetheine adenylyltransferase from Bacillus subtilis (strain 168).